The primary structure comprises 77 residues: Translational regulator CsrA (77 aa).

Belongs to the CsrA/RsmA family. As to quaternary structure, homodimer; the beta-strands of each monomer intercalate to form a hydrophobic core, while the alpha-helices form wings that extend away from the core.

It is found in the cytoplasm. Functionally, a translational regulator that binds mRNA to regulate translation initiation and/or mRNA stability. Usually binds in the 5'-UTR at or near the Shine-Dalgarno sequence preventing ribosome-binding, thus repressing translation. Its main target seems to be the major flagellin gene, while its function is anatagonized by FliW. In Desulfitobacterium hafniense (strain Y51), this protein is Translational regulator CsrA.